A 92-amino-acid chain; its full sequence is Small ribosomal subunit protein uS19 (92 aa).

The protein belongs to the universal ribosomal protein uS19 family.

Functionally, protein S19 forms a complex with S13 that binds strongly to the 16S ribosomal RNA. This is Small ribosomal subunit protein uS19 from Nitrobacter winogradskyi (strain ATCC 25391 / DSM 10237 / CIP 104748 / NCIMB 11846 / Nb-255).